Consider the following 364-residue polypeptide: Probable dual-specificity RNA methyltransferase RlmN (364 aa).

E107 serves as the catalytic Proton acceptor. Residues 113–346 enclose the Radical SAM core domain; it reads HDYGNSVCVT…ATIRREQGSD (234 aa). C120 and C351 form a disulfide bridge. [4Fe-4S] cluster is bound by residues C127, C131, and C134. S-adenosyl-L-methionine is bound by residues 177-178, S209, 232-234, and N308; these read GE and SLH. C351 acts as the S-methylcysteine intermediate in catalysis.

The protein belongs to the radical SAM superfamily. RlmN family. [4Fe-4S] cluster is required as a cofactor.

Its subcellular location is the cytoplasm. The enzyme catalyses adenosine(2503) in 23S rRNA + 2 reduced [2Fe-2S]-[ferredoxin] + 2 S-adenosyl-L-methionine = 2-methyladenosine(2503) in 23S rRNA + 5'-deoxyadenosine + L-methionine + 2 oxidized [2Fe-2S]-[ferredoxin] + S-adenosyl-L-homocysteine. It carries out the reaction adenosine(37) in tRNA + 2 reduced [2Fe-2S]-[ferredoxin] + 2 S-adenosyl-L-methionine = 2-methyladenosine(37) in tRNA + 5'-deoxyadenosine + L-methionine + 2 oxidized [2Fe-2S]-[ferredoxin] + S-adenosyl-L-homocysteine. Its function is as follows. Specifically methylates position 2 of adenine 2503 in 23S rRNA and position 2 of adenine 37 in tRNAs. Confers resistance to some classes of antibiotics. The sequence is that of Probable dual-specificity RNA methyltransferase RlmN from Staphylococcus aureus (strain Mu3 / ATCC 700698).